A 1413-amino-acid chain; its full sequence is DNA-directed RNA polymerase subunit beta' (1413 aa).

Zn(2+)-binding residues include Cys-70, Cys-72, Cys-85, and Cys-88. Residues Asp-460, Asp-462, and Asp-464 each coordinate Mg(2+). The Zn(2+) site is built by Cys-814, Cys-888, Cys-895, and Cys-898.

The protein belongs to the RNA polymerase beta' chain family. As to quaternary structure, the RNAP catalytic core consists of 2 alpha, 1 beta, 1 beta' and 1 omega subunit. When a sigma factor is associated with the core the holoenzyme is formed, which can initiate transcription. Mg(2+) serves as cofactor. Zn(2+) is required as a cofactor.

It carries out the reaction RNA(n) + a ribonucleoside 5'-triphosphate = RNA(n+1) + diphosphate. In terms of biological role, DNA-dependent RNA polymerase catalyzes the transcription of DNA into RNA using the four ribonucleoside triphosphates as substrates. This chain is DNA-directed RNA polymerase subunit beta', found in Buchnera aphidicola subsp. Schizaphis graminum (strain Sg).